The chain runs to 150 residues: 3-dehydroquinate dehydratase (150 aa).

Catalysis depends on Tyr26, which acts as the Proton acceptor. Residues Asn77, His83, and Asp90 each coordinate substrate. The active-site Proton donor is the His103. Residues 104 to 105 (LS) and Arg114 each bind substrate.

Belongs to the type-II 3-dehydroquinase family. As to quaternary structure, homododecamer.

It catalyses the reaction 3-dehydroquinate = 3-dehydroshikimate + H2O. The protein operates within metabolic intermediate biosynthesis; chorismate biosynthesis; chorismate from D-erythrose 4-phosphate and phosphoenolpyruvate: step 3/7. Functionally, catalyzes a trans-dehydration via an enolate intermediate. This Mannheimia succiniciproducens (strain KCTC 0769BP / MBEL55E) protein is 3-dehydroquinate dehydratase.